Reading from the N-terminus, the 513-residue chain is Histidine ammonia-lyase (513 aa).

Residues 144–146 constitute a cross-link (5-imidazolinone (Ala-Gly)); sequence ASG. Ser-145 bears the 2,3-didehydroalanine (Ser) mark.

It belongs to the PAL/histidase family. Post-translationally, contains an active site 4-methylidene-imidazol-5-one (MIO), which is formed autocatalytically by cyclization and dehydration of residues Ala-Ser-Gly.

It localises to the cytoplasm. It carries out the reaction L-histidine = trans-urocanate + NH4(+). The protein operates within amino-acid degradation; L-histidine degradation into L-glutamate; N-formimidoyl-L-glutamate from L-histidine: step 1/3. The sequence is that of Histidine ammonia-lyase from Streptococcus pyogenes serotype M6 (strain ATCC BAA-946 / MGAS10394).